The chain runs to 2175 residues: Non-reducing polyketide synthase PKS1 (2175 aa).

The segment at 5 to 242 is N-terminal acylcarrier protein transacylase domain (SAT); sequence LLFGDQTAEQ…VSIPIYGPYH (238 aa). The Ketosynthase family 3 (KS3) domain occupies 369–801; it reads TDKIAIVGMA…GGNTALLIED (433 aa). Catalysis depends on for beta-ketoacyl synthase activity residues cysteine 541, histidine 676, and histidine 719. Residues 900–1212 form a malonyl-CoA:ACP transacylase (MAT) domain region; it reads FCFTGQGSQY…ISTSICHLFT (313 aa). Residue serine 988 is the For acyl/malonyl transferase activity of the active site. A product template (PT) domain region spans residues 1285 to 1604; the sequence is STSCQNVISE…RKVLNVFLPP (320 aa). An N-terminal hotdog fold region spans residues 1289 to 1424; it reads QNVISEEFDG…CTIRYEDKAV (136 aa). A PKS/mFAS DH domain is found at 1289–1599; that stretch reads QNVISEEFDG…FQQIPRKVLN (311 aa). Histidine 1321 serves as the catalytic Proton acceptor; for dehydratase activity. A C-terminal hotdog fold region spans residues 1452-1599; it reads AHKVQRGMAY…FQQIPRKVLN (148 aa). Residue aspartate 1512 is the Proton donor; for dehydratase activity of the active site. The segment at 1640-1664 is disordered; sequence PVRKSAGPAKAAAAPSMPKPSKVAA. Over residues 1643–1664 the composition is skewed to low complexity; the sequence is KSAGPAKAAAAPSMPKPSKVAA. In terms of domain architecture, Carrier 1 spans 1666-1743; it reads KPAGSMVDKV…EMKKYFSQFN (78 aa). Serine 1703 is modified (O-(pantetheine 4'-phosphoryl)serine). Residues 1766 to 1804 form a disordered region; the sequence is ATPFDEMSTPASSAPSVPQSDAGKPSPDSPTGDSLSDDV. Residues 1774-1784 show a composition bias toward polar residues; the sequence is TPASSAPSVPQ. One can recognise a Carrier 2 domain in the interval 1801–1878; sequence SDDVGDVSIA…DIENALGMRP (78 aa). O-(pantetheine 4'-phosphoryl)serine is present on serine 1838. The interval 1879–1899 is disordered; sequence KPKAVGPKLSKPSTKTDMNEV. The segment covering 1889 to 1899 has biased composition (polar residues); it reads KPSTKTDMNEV. Residues 1932–2158 form a claisen cyclase domain region; that stretch reads KVFFLPDGSG…GHHFSMMKDP (227 aa). Serine 2002 serves as the catalytic For Claisen cyclase activity.

The cofactor is pantetheine 4'-phosphate.

The enzyme catalyses 6 malonyl-CoA + acetyl-CoA + 6 H(+) = naphtopyrone YWA1 + 6 CO2 + 7 CoA + H2O. The protein operates within pigment biosynthesis; melanin biosynthesis. Non-reducing polyketide synthase; part of the gene cluster 29 that mediates the biosynthesis of mediates the biosynthesis of dihydroxynaphthalene (DHN)-melanin, a bluish-green pigment and a structural component of the conidial wall. The first step of the pathway is the production of the heptaketide naphtopyrone YWA1 by the polyketide synthase PKS1 though condensation of acetyl-CoA with malonyl-CoA. The chain is Non-reducing polyketide synthase PKS1 from Zymoseptoria tritici (strain CBS 115943 / IPO323) (Speckled leaf blotch fungus).